Consider the following 181-residue polypeptide: Putative manganese efflux pump MntP (181 aa).

6 helical membrane-spanning segments follow: residues 4-24 (VVLL…GLGA), 31-51 (VVLG…MPLI), 59-79 (MLGW…ALIA), 102-122 (VLLL…FALT), 129-149 (LVSC…GVFI), and 161-181 (AELA…AVAV).

Belongs to the MntP (TC 9.B.29) family.

The protein resides in the cell inner membrane. In terms of biological role, probably functions as a manganese efflux pump. This Saccharophagus degradans (strain 2-40 / ATCC 43961 / DSM 17024) protein is Putative manganese efflux pump MntP.